A 61-amino-acid polypeptide reads, in one-letter code: Large ribosomal subunit protein bL32 (61 aa).

This sequence belongs to the bacterial ribosomal protein bL32 family.

The protein is Large ribosomal subunit protein bL32 of Ehrlichia chaffeensis (strain ATCC CRL-10679 / Arkansas).